We begin with the raw amino-acid sequence, 265 residues long: Uridylate kinase (265 aa).

The interval 1 to 29 is disordered; that stretch reads MTESREPHVAGSAAPRPEPANGLASGQPS. 40–43 serves as a coordination point for ATP; it reads KLGG. Gly81 provides a ligand contact to UMP. ATP is bound by residues Gly82 and Arg86. UMP-binding positions include Asp101 and 162–169; that span reads MGLPYFST. ATP-binding residues include Phe195 and Asp198.

This sequence belongs to the UMP kinase family. As to quaternary structure, homohexamer.

The protein resides in the cytoplasm. The enzyme catalyses UMP + ATP = UDP + ADP. It participates in pyrimidine metabolism; CTP biosynthesis via de novo pathway; UDP from UMP (UMPK route): step 1/1. Inhibited by UTP. Its function is as follows. Catalyzes the reversible phosphorylation of UMP to UDP. In Mycobacterium avium (strain 104), this protein is Uridylate kinase.